We begin with the raw amino-acid sequence, 307 residues long: Ribonuclease Z (307 aa).

Zn(2+) contacts are provided by His63, His65, Asp67, His68, His141, Asp212, and His270. Asp67 serves as the catalytic Proton acceptor.

The protein belongs to the RNase Z family. As to quaternary structure, homodimer. Zn(2+) is required as a cofactor.

It carries out the reaction Endonucleolytic cleavage of RNA, removing extra 3' nucleotides from tRNA precursor, generating 3' termini of tRNAs. A 3'-hydroxy group is left at the tRNA terminus and a 5'-phosphoryl group is left at the trailer molecule.. Functionally, zinc phosphodiesterase, which displays some tRNA 3'-processing endonuclease activity. Probably involved in tRNA maturation, by removing a 3'-trailer from precursor tRNA. In Bacillus mycoides (strain KBAB4) (Bacillus weihenstephanensis), this protein is Ribonuclease Z.